The sequence spans 367 residues: MTETQFGGDEYDVSVSVSEAAVERALDVRPADVAPASSLTFARNVFVPLTTACRYTCTYCTYYDVPGEASLLTPEEIREQCRVGADAGCTEALFTFGDQPDDRYTAIHEQLGEWGYDSIHEYLRAACEIALEAGLLPHANPGDQTRAQMATVADVNASMGVMLETTADVQAHGGPRAKSPEQRLHTIDVAGDLGVPFTTGILVGIGEDWRDRAESLLAIRALHERHDHVQEVIVQPVRPNARWQGEPPGAETMRRVVAMARAVLPAEVGVQVPPNLTDVRGLVDCGVDDLGGVSPVTKDHINPDYAWPALDELSAIADHAGVPLRERLPVYERFLPADGGTADDGWVSQRIWRAIEDGDRYEAVRAE.

The region spanning Leu-39–Asn-275 is the Radical SAM core domain. 3 residues coordinate [4Fe-4S] cluster: Cys-53, Cys-57, and Cys-60.

This sequence belongs to the radical SAM superfamily. CofG family. In terms of assembly, consists of two subunits, CofG and CofH. The cofactor is [4Fe-4S] cluster.

It carries out the reaction 5-amino-5-(4-hydroxybenzyl)-6-(D-ribitylimino)-5,6-dihydrouracil + S-adenosyl-L-methionine = 7,8-didemethyl-8-hydroxy-5-deazariboflavin + 5'-deoxyadenosine + L-methionine + NH4(+) + H(+). It participates in cofactor biosynthesis; coenzyme F0 biosynthesis. Catalyzes the radical-mediated synthesis of 7,8-didemethyl-8-hydroxy-5-deazariboflavin from 5-amino-5-(4-hydroxybenzyl)-6-(D-ribitylimino)-5,6-dihydrouracil. This chain is 7,8-didemethyl-8-hydroxy-5-deazariboflavin synthase, found in Halobacterium salinarum (strain ATCC 29341 / DSM 671 / R1).